The following is a 276-amino-acid chain: 4-hydroxy-tetrahydrodipicolinate reductase (276 aa).

NAD(+)-binding positions include 10-15 (GALGKM), Asp-36, and 109-111 (GTT). The Proton donor/acceptor role is filled by His-165. His-166 lines the (S)-2,3,4,5-tetrahydrodipicolinate pocket. The active-site Proton donor is Lys-169. 175–176 (GT) lines the (S)-2,3,4,5-tetrahydrodipicolinate pocket.

It belongs to the DapB family.

Its subcellular location is the cytoplasm. The enzyme catalyses (S)-2,3,4,5-tetrahydrodipicolinate + NAD(+) + H2O = (2S,4S)-4-hydroxy-2,3,4,5-tetrahydrodipicolinate + NADH + H(+). The catalysed reaction is (S)-2,3,4,5-tetrahydrodipicolinate + NADP(+) + H2O = (2S,4S)-4-hydroxy-2,3,4,5-tetrahydrodipicolinate + NADPH + H(+). Its pathway is amino-acid biosynthesis; L-lysine biosynthesis via DAP pathway; (S)-tetrahydrodipicolinate from L-aspartate: step 4/4. In terms of biological role, catalyzes the conversion of 4-hydroxy-tetrahydrodipicolinate (HTPA) to tetrahydrodipicolinate. This is 4-hydroxy-tetrahydrodipicolinate reductase from Prochlorococcus marinus (strain SARG / CCMP1375 / SS120).